We begin with the raw amino-acid sequence, 448 residues long: Probable D-serine dehydratase (448 aa).

N6-(pyridoxal phosphate)lysine is present on Lys-119.

It belongs to the serine/threonine dehydratase family. DsdA subfamily. Pyridoxal 5'-phosphate is required as a cofactor.

It catalyses the reaction D-serine = pyruvate + NH4(+). In Chromobacterium violaceum (strain ATCC 12472 / DSM 30191 / JCM 1249 / CCUG 213 / NBRC 12614 / NCIMB 9131 / NCTC 9757 / MK), this protein is Probable D-serine dehydratase.